The sequence spans 373 residues: Ribonuclease D (373 aa).

The region spanning 3–171 is the 3'-5' exonuclease domain; it reads YQLITTDAGL…MAKRLVQETE (169 aa). One can recognise an HRDC domain in the interval 210–289; it reads RPRQLGCLQK…AEAAELEESA (80 aa).

The protein belongs to the RNase D family. The cofactor is a divalent metal cation.

The protein resides in the cytoplasm. It carries out the reaction Exonucleolytic cleavage that removes extra residues from the 3'-terminus of tRNA to produce 5'-mononucleotides.. Its function is as follows. Exonuclease involved in the 3' processing of various precursor tRNAs. Initiates hydrolysis at the 3'-terminus of an RNA molecule and releases 5'-mononucleotides. This is Ribonuclease D from Serratia proteamaculans (strain 568).